Here is a 362-residue protein sequence, read N- to C-terminus: Fructose-bisphosphate aldolase (362 aa).

A D-glyceraldehyde 3-phosphate-binding site is contributed by S65. D112 (proton donor) is an active-site residue. Residues H113, D147, E177, and H229 each contribute to the Zn(2+) site. Residue G230 participates in dihydroxyacetone phosphate binding. Residue H268 participates in Zn(2+) binding. Dihydroxyacetone phosphate is bound by residues 269-271 (GGS) and 290-293 (NVDT).

Belongs to the class II fructose-bisphosphate aldolase family. In terms of assembly, homodimer. Zn(2+) is required as a cofactor.

It carries out the reaction beta-D-fructose 1,6-bisphosphate = D-glyceraldehyde 3-phosphate + dihydroxyacetone phosphate. It functions in the pathway carbohydrate degradation; glycolysis; D-glyceraldehyde 3-phosphate and glycerone phosphate from D-glucose: step 4/4. Functionally, catalyzes the aldol condensation of dihydroxyacetone phosphate (DHAP or glycerone-phosphate) with glyceraldehyde 3-phosphate (G3P) to form fructose 1,6-bisphosphate (FBP) in gluconeogenesis and the reverse reaction in glycolysis. This is Fructose-bisphosphate aldolase (fbaA) from Aspergillus oryzae (strain ATCC 42149 / RIB 40) (Yellow koji mold).